We begin with the raw amino-acid sequence, 173 residues long: Nicotinamide-nucleotide adenylyltransferase (173 aa).

The protein belongs to the archaeal NMN adenylyltransferase family.

It is found in the cytoplasm. The catalysed reaction is beta-nicotinamide D-ribonucleotide + ATP + H(+) = diphosphate + NAD(+). The protein operates within cofactor biosynthesis; NAD(+) biosynthesis; NAD(+) from nicotinamide D-ribonucleotide: step 1/1. This is Nicotinamide-nucleotide adenylyltransferase from Methanosarcina acetivorans (strain ATCC 35395 / DSM 2834 / JCM 12185 / C2A).